Consider the following 357-residue polypeptide: Protein RecA (357 aa).

73-80 (GPESSGKT) provides a ligand contact to ATP.

The protein belongs to the RecA family.

The protein localises to the cytoplasm. Functionally, can catalyze the hydrolysis of ATP in the presence of single-stranded DNA, the ATP-dependent uptake of single-stranded DNA by duplex DNA, and the ATP-dependent hybridization of homologous single-stranded DNAs. It interacts with LexA causing its activation and leading to its autocatalytic cleavage. This is Protein RecA from Nitratidesulfovibrio vulgaris (strain DSM 19637 / Miyazaki F) (Desulfovibrio vulgaris).